The following is a 348-amino-acid chain: UDP-glucose 4-epimerase (348 aa).

T125 contributes to the substrate binding site. Y149 (proton acceptor) is an active-site residue.

The protein belongs to the NAD(P)-dependent epimerase/dehydratase family. NAD(+) is required as a cofactor.

The catalysed reaction is UDP-alpha-D-glucose = UDP-alpha-D-galactose. It functions in the pathway carbohydrate metabolism; galactose metabolism. The protein operates within glycan metabolism; exopolysaccharide biosynthesis. The polypeptide is UDP-glucose 4-epimerase (exoB) (Azospirillum brasilense).